Consider the following 894-residue polypeptide: Transcriptional activator/repressor GIS1 (894 aa).

A JmjN domain is found at valine 12–leucine 53. Serine 70 is subject to Phosphoserine. The stretch at glutamate 90–leucine 110 forms a coiled coil. The 155-residue stretch at proline 170–cysteine 324 folds into the JmjC domain. The Bipartite nuclear localization signal motif lies at arginine 316–lysine 332. The tract at residues cysteine 324–asparagine 355 is disordered. A compositionally biased stretch (polar residues) spans proline 335–aspartate 354. Serine 343 carries the phosphoserine modification. Residues glutamine 361–asparagine 385 are a coiled coil. Low complexity predominate over residues asparagine 521–threonine 554. The interval asparagine 521–glycine 558 is disordered. Phosphoserine is present on residues serine 690, serine 694, serine 696, serine 734, and serine 747. Residues leucine 756 to asparagine 768 are compositionally biased toward low complexity. Positions leucine 756–histidine 810 are disordered. Composition is skewed to polar residues over residues phenylalanine 769–leucine 785 and tyrosine 795–histidine 810. The C2H2-type 1 zinc finger occupies tyrosine 828–histidine 851. A C2H2-type 2; atypical zinc finger spans residues histidine 857–cysteine 882.

It localises to the nucleus. Its function is as follows. Transcription factor involved in the regulation of gene expression upon nutrient starvation. Recognizes and binds to the post-diauxic-shift element 5'-T[AT]AGGGAT-3' in the promoter region. Can act as a transcriptional activator (e.g. of stress genes like SSA3, HSP12 and HSP26) as well as a repressor (e.g. of pyrophosphate phosphatase DPP1). GIS1 also acts as a DNA damage-responsive transcriptional repressor of photolyase PHR1. This chain is Transcriptional activator/repressor GIS1 (GIS1), found in Saccharomyces cerevisiae (strain ATCC 204508 / S288c) (Baker's yeast).